The following is a 144-amino-acid chain: UPF0179 protein PF1381 (144 aa).

The protein belongs to the UPF0179 family.

This chain is UPF0179 protein PF1381, found in Pyrococcus furiosus (strain ATCC 43587 / DSM 3638 / JCM 8422 / Vc1).